We begin with the raw amino-acid sequence, 1230 residues long: Cullin-associated NEDD8-dissociated protein 1 (1230 aa).

N-acetylalanine is present on A2. HEAT repeat units lie at residues 2-39 (ASAS…KDSI), 44-81 (DSER…KVKE), 83-119 (QVET…ELPP), 131-165 (CKKI…LSRQ), 171-208 (NFHP…SCGN), 210-247 (VFVD…QAGH), 248-282 (RIGE…FESF), 289-366 (EVYP…TRHE), 370-407 (EFYK…QTRP), 424-467 (PLTM…VLPG), 471-510 (QHIP…NHSP), and 515-552 (PHVQ…VIRP). The disordered stretch occupies residues 315 to 344 (DEDEDENAMDADGGDDDDQGSDDEYSDDDD). S335 bears the Phosphoserine mark. S558 bears the Phosphoserine mark. HEAT repeat units lie at residues 563–602 (PYIK…NLGD), 606–643 (PDLS…LKID), 646–683 (PVLG…NYSD), 688–725 (AMID…VYPS), 729–768 (KISG…TGTN), 770–808 (LGYM…ALTR), 809–845 (ACPK…LGEV), 852–889 (SGQL…GNLP), 890–927 (EYLP…GLKP), 928–960 (YVEN…KLTL), 961–998 (IDPE…DHPQ), 1002–1039 (PLLK…NKPS), 1043–1097 (DLLD…DSCL), 1099–1133 (RLDI…LSTL), and 1140–1189 (QRLD…IPEA). K971 is subject to N6-acetyllysine.

It belongs to the CAND family. Interacts with TBP. Part of a complex that contains CUL1 and RBX1. Interacts with unneddylated cullins: interacts with CUL1, CUL2, CUL3, CUL4A, CUL4B and CUL5. Does not bind neddylated CUL1. Interaction with cullins is abolished in presence of COMMD1, which antagonizes with CAND1 for interacting with cullins. Interacts with ERCC6. Interacts with DCUN1D1, DCUN1D2, DCUN1D3, DCUN1D4 and DCUN1D5; these interactions are bridged by cullins and strongly inhibits the neddylation of cullins.

The protein resides in the cytoplasm. It is found in the nucleus. In terms of biological role, key assembly factor of SCF (SKP1-CUL1-F-box protein) E3 ubiquitin ligase complexes that promotes the exchange of the substrate-recognition F-box subunit in SCF complexes, thereby playing a key role in the cellular repertoire of SCF complexes. Acts as a F-box protein exchange factor. The exchange activity of CAND1 is coupled with cycles of neddylation conjugation: in the deneddylated state, cullin-binding CAND1 binds CUL1-RBX1, increasing dissociation of the SCF complex and promoting exchange of the F-box protein. Probably plays a similar role in other cullin-RING E3 ubiquitin ligase complexes. The sequence is that of Cullin-associated NEDD8-dissociated protein 1 (Cand1) from Mus musculus (Mouse).